Here is a 445-residue protein sequence, read N- to C-terminus: Phosphoglucosamine mutase (445 aa).

Ser-102 (phosphoserine intermediate) is an active-site residue. 4 residues coordinate Mg(2+): Ser-102, Asp-241, Asp-243, and Asp-245. Phosphoserine is present on Ser-102.

This sequence belongs to the phosphohexose mutase family. It depends on Mg(2+) as a cofactor. Post-translationally, activated by phosphorylation.

It carries out the reaction alpha-D-glucosamine 1-phosphate = D-glucosamine 6-phosphate. Catalyzes the conversion of glucosamine-6-phosphate to glucosamine-1-phosphate. The sequence is that of Phosphoglucosamine mutase from Citrobacter koseri (strain ATCC BAA-895 / CDC 4225-83 / SGSC4696).